The primary structure comprises 114 residues: Seed trypsin/chymotrypsin inhibitor TI5-72 (114 aa).

Positions 1 to 28 are cleaved as a signal peptide; sequence MELMNKKVMMKLALMVFLLSFAANVVNA. A propeptide spanning residues 29–42 is cleaved from the precursor; sequence RFDSTSFITQVLSN. 7 cysteine pairs are disulfide-bonded: C50-C103, C51-C66, C54-C99, C56-C64, C73-C80, C77-C92, and C82-C90.

It belongs to the Bowman-Birk serine protease inhibitor family. Seed.

Inhibitor of trypsin and of chymotrypsin. May function as a natural phytochemical defense against predators. This Pisum sativum (Garden pea) protein is Seed trypsin/chymotrypsin inhibitor TI5-72 (TI572).